We begin with the raw amino-acid sequence, 99 residues long: Transmembrane protein 14A (99 aa).

The next 3 membrane-spanning stretches (helical) occupy residues 1 to 21 (MDLI…LGYK), 24 to 44 (GGVP…YGAY), and 79 to 99 (PAGL…LLLL).

It belongs to the TMEM14 family.

The protein resides in the mitochondrion membrane. Its subcellular location is the endoplasmic reticulum membrane. Inhibits apoptosis via negative regulation of the mitochondrial outer membrane permeabilization involved in apoptotic signaling pathway. The protein is Transmembrane protein 14A (Tmem14a) of Mus musculus (Mouse).